Here is an 856-residue protein sequence, read N- to C-terminus: Leucine--tRNA ligase (856 aa).

Residues 42–52 (PYPSGKLHMGH) carry the 'HIGH' region motif. The 'KMSKS' region motif lies at 615–619 (KMSKS). K618 is an ATP binding site.

Belongs to the class-I aminoacyl-tRNA synthetase family.

The protein resides in the cytoplasm. It carries out the reaction tRNA(Leu) + L-leucine + ATP = L-leucyl-tRNA(Leu) + AMP + diphosphate. This Chromohalobacter salexigens (strain ATCC BAA-138 / DSM 3043 / CIP 106854 / NCIMB 13768 / 1H11) protein is Leucine--tRNA ligase.